A 224-amino-acid polypeptide reads, in one-letter code: Non-structural protein 3 (224 aa).

A CoV 3a-like viroporin TM domain is found at 34–124; the sequence is NVVPIRQASN…RYKNALFIIF (91 aa). 3 helical membrane-spanning segments follow: residues 40 to 60, 69 to 88, and 95 to 111; these read QASN…FALF, YIML…LLYY, and ATII…LVCF. Residues 128–203 enclose the CoV 3a-like viroporin CD domain; sequence TLSFLNGKAA…KLYVFSQHQI (76 aa).

The protein resides in the host membrane. This is Non-structural protein 3 from Sus scrofa (Pig).